Consider the following 91-residue polypeptide: Probable Fe(2+)-trafficking protein (91 aa).

Belongs to the Fe(2+)-trafficking protein family.

Could be a mediator in iron transactions between iron acquisition and iron-requiring processes, such as synthesis and/or repair of Fe-S clusters in biosynthetic enzymes. The polypeptide is Probable Fe(2+)-trafficking protein (Mannheimia succiniciproducens (strain KCTC 0769BP / MBEL55E)).